Reading from the N-terminus, the 733-residue chain is Leucine-rich repeat neuronal protein 4 (733 aa).

The signal sequence occupies residues 1 to 19 (MRWTLMLQLLQLLLQLLMA). Residues 20-676 (QSQSLERISQ…CATFTTKPSS (657 aa)) lie on the Extracellular side of the membrane. LRR repeat units lie at residues 62–82 (GVTT…CLPR), 83–106 (TLRS…GRLP), 107–128 (ELRV…RDTL), 130–151 (ELRE…AGPS), 154–175 (SLRS…TFAC), 178–199 (ALRL…AFAG), 207–230 (ALEL…RNLP), 231–253 (KLKS…IFKM), 256–278 (NLRQ…IFQD), and 281–302 (NLQV…NSSQ). Asparagine 70 carries N-linked (GlcNAc...) asparagine glycosylation. Asparagine 183 is a glycosylation site (N-linked (GlcNAc...) asparagine). Residues asparagine 291, asparagine 299, asparagine 327, asparagine 408, and asparagine 469 are each glycosylated (N-linked (GlcNAc...) asparagine). Residues 311–364 (NPLICSCELAWLLVDVNKTVLHRAADTMCEPALGSTGPFSGPLSLSHLSNVCRS) enclose the LRRCT domain. Positions 395–423 (STALSAQPGGSQQNITKVPSLTMTSPTQG) are disordered. A disordered region spans residues 480-518 (KYLEPLPTSPNPRSLPQTKQRTQATPRALHTDPPQDEIP). The segment covering 490–504 (NPRSLPQTKQRTQAT) has biased composition (polar residues). Positions 576–675 (TPDPPTLQGV…SCATFTTKPS (100 aa)) constitute a Fibronectin type-III domain. Residue asparagine 619 is glycosylated (N-linked (GlcNAc...) asparagine). A helical transmembrane segment spans residues 677–697 (VVIFWGLCTASGLLLVSTLVL). The Cytoplasmic segment spans residues 698–733 (SVCLWRQRWKPHRQFYDTHLVAFKNPARAEEVTQWE).

The protein localises to the membrane. Its function is as follows. May play an important role in hippocampus-dependent long-lasting memory. The polypeptide is Leucine-rich repeat neuronal protein 4 (Lrrn4) (Mus musculus (Mouse)).